Consider the following 288-residue polypeptide: MKNVLSIQSHVVYGFAGNKSATFPMQLLGVDVWALNTVQFSNHTQYGKWTGMVIPQEQIREIVTGLDNIEKLQECDALLSGYLGSAEQVDQILFALEQIKLRNPNALYLCDPVMPHPKKSCVVANGVCEALIEKAIPVADIMTPNLHELRQLTEFPINTFDDVLKAVNALIAKGVKKVLVKHLGSAGKINDPDTFEIIMATPEGVWHLSRPLYQFNFEPVGVGDLIAGTFLANLLNGKSDVEAFEAMNNEVAGVMKTTFELGSYELQTIAARFEILNPSSNYKAEKVA.

Substrate contacts are provided by residues S9 and T44–Q45. ATP contacts are provided by D111, E148, and K181. Residue D224 coordinates substrate.

Belongs to the pyridoxine kinase family. PdxY subfamily. Homodimer. It depends on Mg(2+) as a cofactor.

It catalyses the reaction pyridoxal + ATP = pyridoxal 5'-phosphate + ADP + H(+). The protein operates within cofactor metabolism; pyridoxal 5'-phosphate salvage; pyridoxal 5'-phosphate from pyridoxal: step 1/1. Pyridoxal kinase involved in the salvage pathway of pyridoxal 5'-phosphate (PLP). Catalyzes the phosphorylation of pyridoxal to PLP. The chain is Pyridoxal kinase PdxY from Haemophilus influenzae (strain PittEE).